A 181-amino-acid chain; its full sequence is MPPTNNYRISGEPPSTTPSHPPPKPKTRILSLFLVGVIMFSIFFLFLVLIGIASVLILPLLLSSLHRHHRRRRRNRRQESSDGLSSRFVKKLPQFKFSEPSTYTRYESDCVVCFDGFRQGQWCRNLPGCGHVFHRKCVDTWLLKASTCPICRARVRLWEEDPQEGELWRCFGHRRSSLLDL.

Residues 1 to 24 (MPPTNNYRISGEPPSTTPSHPPPK) form a disordered region. Pro residues predominate over residues 15–24 (STTPSHPPPK). A helical transmembrane segment spans residues 32–52 (LFLVGVIMFSIFFLFLVLIGI). The RING-type; atypical zinc-finger motif lies at 110-152 (CVVCFDGFRQGQWCRNLPGCGHVFHRKCVDTWLLKASTCPICR).

Belongs to the RING-type zinc finger family. ATL subfamily.

It localises to the membrane. The enzyme catalyses S-ubiquitinyl-[E2 ubiquitin-conjugating enzyme]-L-cysteine + [acceptor protein]-L-lysine = [E2 ubiquitin-conjugating enzyme]-L-cysteine + N(6)-ubiquitinyl-[acceptor protein]-L-lysine.. The protein operates within protein modification; protein ubiquitination. This chain is RING-H2 finger protein ATL56 (ATL56), found in Arabidopsis thaliana (Mouse-ear cress).